The following is a 296-amino-acid chain: Sulfotransferase 6B1 (296 aa).

His-112 (proton acceptor) is an active-site residue. Residues Arg-134, Ser-142, Tyr-197, and 253–255 contribute to the 3'-phosphoadenylyl sulfate site; that span reads RKG.

It belongs to the sulfotransferase 1 family.

The protein resides in the cytoplasm. It localises to the cytosol. It carries out the reaction thyroxine + 3'-phosphoadenylyl sulfate = thyroxine sulfate + adenosine 3',5'-bisphosphate + H(+). Strongly inhibited by the divalent metal cations Fe(2+), Hg(2+), Co(2+), Zn(2+), Cu(2+) and Cd(2+). Its function is as follows. Sulfotransferase that utilizes 3'-phospho-5'-adenylyl sulfate (PAPS) as sulfonate donor to catalyze the sulfate conjugation of a variety of xenobiotic and endogenous compounds, including dopamine, T3 (triiodo-L-thyronine), T4 (thyroxine), flavonoids, isoflavonoids, and other phenolic compounds. The polypeptide is Sulfotransferase 6B1 (Danio rerio (Zebrafish)).